The primary structure comprises 168 residues: Shikimate kinase (168 aa).

10-15 (CSGKST) contacts ATP. S14 is a Mg(2+) binding site. Substrate contacts are provided by D32, R56, and G78. R116 contacts ATP. R133 provides a ligand contact to substrate.

This sequence belongs to the shikimate kinase family. As to quaternary structure, monomer. Mg(2+) serves as cofactor.

It is found in the cytoplasm. The catalysed reaction is shikimate + ATP = 3-phosphoshikimate + ADP + H(+). It functions in the pathway metabolic intermediate biosynthesis; chorismate biosynthesis; chorismate from D-erythrose 4-phosphate and phosphoenolpyruvate: step 5/7. Functionally, catalyzes the specific phosphorylation of the 3-hydroxyl group of shikimic acid using ATP as a cosubstrate. The sequence is that of Shikimate kinase from Aquifex aeolicus (strain VF5).